A 326-amino-acid chain; its full sequence is Putative HTH-type transcriptional regulator y4qH (326 aa).

One can recognise an HTH luxR-type domain in the interval 257–322; sequence AVQKIPALSL…VAAIKAISLG (66 aa). Positions 281 to 300 form a DNA-binding region, H-T-H motif; it reads SWDIGVIMRISENTVNFHIK.

Belongs to the autoinducer-regulated transcriptional regulatory protein family.

This Sinorhizobium fredii (strain NBRC 101917 / NGR234) protein is Putative HTH-type transcriptional regulator y4qH.